A 205-amino-acid polypeptide reads, in one-letter code: Recombination protein RecR (205 aa).

The segment at 64–79 adopts a C4-type zinc-finger fold; sequence CSRCYFITQGDLCAIC. Residues 87-182 form the Toprim domain; that stretch reads RVICVVEEPL…RVTRLARGLP (96 aa).

It belongs to the RecR family.

Its function is as follows. May play a role in DNA repair. It seems to be involved in an RecBC-independent recombinational process of DNA repair. It may act with RecF and RecO. The polypeptide is Recombination protein RecR (Roseiflexus sp. (strain RS-1)).